The chain runs to 341 residues: L-threonine 3-dehydrogenase (341 aa).

A Zn(2+)-binding site is contributed by C38. Catalysis depends on charge relay system residues T40 and H43. Residues H63, E64, C93, C96, C99, and C107 each coordinate Zn(2+). Residues I175, D195, R200, 262-264 (LGI), and 286-287 (IY) each bind NAD(+).

This sequence belongs to the zinc-containing alcohol dehydrogenase family. In terms of assembly, homotetramer. Zn(2+) is required as a cofactor.

It is found in the cytoplasm. It carries out the reaction L-threonine + NAD(+) = (2S)-2-amino-3-oxobutanoate + NADH + H(+). Its pathway is amino-acid degradation; L-threonine degradation via oxydo-reductase pathway; glycine from L-threonine: step 1/2. In terms of biological role, catalyzes the NAD(+)-dependent oxidation of L-threonine to 2-amino-3-ketobutyrate. The chain is L-threonine 3-dehydrogenase from Shewanella baltica (strain OS185).